A 373-amino-acid polypeptide reads, in one-letter code: Flagellar P-ring protein 1 (373 aa).

Positions 1–25 (MKPINTFFSSFLLALTLGLPATSQA) are cleaved as a signal peptide.

This sequence belongs to the FlgI family. In terms of assembly, the basal body constitutes a major portion of the flagellar organelle and consists of four rings (L,P,S, and M) mounted on a central rod.

It localises to the periplasm. Its subcellular location is the bacterial flagellum basal body. Its function is as follows. Assembles around the rod to form the L-ring and probably protects the motor/basal body from shearing forces during rotation. In Vibrio parahaemolyticus serotype O3:K6 (strain RIMD 2210633), this protein is Flagellar P-ring protein 1.